We begin with the raw amino-acid sequence, 92 residues long: Small ribosomal subunit protein uS19c (92 aa).

Belongs to the universal ribosomal protein uS19 family.

The protein resides in the plastid. In terms of biological role, protein S19 forms a complex with S13 that binds strongly to the 16S ribosomal RNA. This Cuscuta gronovii (Common dodder) protein is Small ribosomal subunit protein uS19c.